Reading from the N-terminus, the 290-residue chain is Arginine and glutamate-rich protein 1 (290 aa).

Polar residues predominate over residues 1–10 (MGSRSRTPSP). 3 disordered regions span residues 1–137 (MGSR…AKEL), 193–216 (ERRREQIREEERRREEDEKQKREE), and 249–290 (MDEE…PGAL). Over residues 12-28 (GKRRHHKSKHKKRSKSH) the composition is skewed to basic residues. Basic and acidic residues-rich tracts occupy residues 29–44 (HDHERPSTRTDRDKSS) and 53–76 (RERDRDRERDRHRSDRHTERDYRH). S77 and S79 each carry phosphoserine. Positions 88–99 (SSSSSDSQYSEQ) are enriched in low complexity. Residues 111–269 (FKKLDEQNQM…QEKRVKEEQK (159 aa)) adopt a coiled-coil conformation. Residues 124–137 (RLAEMERQRRAKEL) show a composition bias toward basic and acidic residues. A compositionally biased stretch (basic and acidic residues) spans 249-269 (MDEERQRMRKEQEKRVKEEQK).

Belongs to the ARGLU1 family. In terms of assembly, associates with the U1-snRNP complex; the interaction is enhanced by binding of Arglu1 to a stable intronic sequence RNA (sisRNA) produced from the Arglu1 gene by premature cleavage.

The protein localises to the nucleus. The protein resides in the nucleus speckle. Post-transcriptional regulator of gene expression; modulates splicing and premature cleavage at cryptic polyadenylation sites of its own pre-mRNA through binding and regulation of the U1-snRNP complex. The polypeptide is Arginine and glutamate-rich protein 1 (Drosophila melanogaster (Fruit fly)).